The primary structure comprises 327 residues: Transaldolase (327 aa).

Catalysis depends on lysine 132, which acts as the Schiff-base intermediate with substrate.

This sequence belongs to the transaldolase family. Type 1 subfamily.

Its subcellular location is the cytoplasm. The enzyme catalyses D-sedoheptulose 7-phosphate + D-glyceraldehyde 3-phosphate = D-erythrose 4-phosphate + beta-D-fructose 6-phosphate. It functions in the pathway carbohydrate degradation; pentose phosphate pathway; D-glyceraldehyde 3-phosphate and beta-D-fructose 6-phosphate from D-ribose 5-phosphate and D-xylulose 5-phosphate (non-oxidative stage): step 2/3. Transaldolase is important for the balance of metabolites in the pentose-phosphate pathway. The protein is Transaldolase of Chlamydia pneumoniae (Chlamydophila pneumoniae).